The following is a 304-amino-acid chain: Killer cell immunoglobulin-like receptor 2DS1 (304 aa).

The signal sequence occupies residues 1 to 21; the sequence is MSLTVVSMACVGFFLLQGAWP. The Extracellular segment spans residues 22–245; that stretch reads HEGVHRKPSL…SETGNPRHLH (224 aa). Ig-like C2-type domains are found at residues 42–107 and 142–205; these read EETV…VTHS and GENV…FRDS. A disulfide bridge links C49 with C100. Residues N67, N84, N144, and N178 are each glycosylated (N-linked (GlcNAc...) asparagine). Residues C149 and C198 are joined by a disulfide bond. The interval 220–239 is disordered; that stretch reads VTGNPSNSWPSPTEPSSETG. A compositionally biased stretch (low complexity) spans 223-239; it reads NPSNSWPSPTEPSSETG. The chain crosses the membrane as a helical span at residues 246–264; it reads VLIGTSVVKIPFTILLFFL. The Cytoplasmic segment spans residues 265 to 304; sequence LHRWCSDKKNAAVMDQEPAGNRTVNSEDSDEQDHQEVSYA. Residues 280-304 form a disordered region; that stretch reads QEPAGNRTVNSEDSDEQDHQEVSYA.

It belongs to the immunoglobulin superfamily. As to quaternary structure, interacts with the adapter protein TYROBP/DAP12; the interaction enhances KIR2DS1 stability at the cell surface. Expressed by NK cells.

It localises to the cell membrane. Receptor on natural killer (NK) cells for some HLA-C alleles such as w6. Does not inhibit the activity of NK cells. This Homo sapiens (Human) protein is Killer cell immunoglobulin-like receptor 2DS1.